A 298-amino-acid chain; its full sequence is Aclacinomycin methylesterase RdmC (298 aa).

One can recognise an AB hydrolase-1 domain in the interval 24–277 (PALLLVMGGN…LAEIPGMGHA (254 aa)). Catalysis depends on residues S102, D248, and H276.

This sequence belongs to the AB hydrolase superfamily. Hydrolase RdmC family. In terms of assembly, monomer.

The catalysed reaction is aclacinomycin T + H2O = 15-demethylaclacinomycin T + methanol. It functions in the pathway antibiotic biosynthesis; aclacinomycin biosynthesis. Involved in the biosynthesis of the anthracycline aclacinomycin which is an aromatic polyketide antibiotic that exhibits high cytotoxicity and is widely applied in the chemotherapy of a variety of cancers. Catalyzes the removal of the methoxy group from the C-15 position of aclacinomycin T and A to yield 15-demethoxyaclacinomycin T and A, respectively. The chain is Aclacinomycin methylesterase RdmC (rdmC) from Streptomyces purpurascens.